The sequence spans 355 residues: GTPase Obg (355 aa).

Residues 1-159 form the Obg domain; the sequence is MKLVDEAEIL…RLLKLELKLL (159 aa). The region spanning 160–342 is the OBG-type G domain; sequence ADVGLLGFPN…IMKDVMAFFD (183 aa). GTP-binding positions include 166–173, 191–195, 213–216, 292–295, and 323–325; these read GFPNAGKS, FTTLY, DVPG, NKAD, and SAL. Residues Ser-173 and Thr-193 each contribute to the Mg(2+) site.

This sequence belongs to the TRAFAC class OBG-HflX-like GTPase superfamily. OBG GTPase family. As to quaternary structure, monomer. Mg(2+) serves as cofactor.

It is found in the cytoplasm. Functionally, an essential GTPase which binds GTP, GDP and possibly (p)ppGpp with moderate affinity, with high nucleotide exchange rates and a fairly low GTP hydrolysis rate. Plays a role in control of the cell cycle, stress response, ribosome biogenesis and in those bacteria that undergo differentiation, in morphogenesis control. The polypeptide is GTPase Obg (Xanthomonas euvesicatoria pv. vesicatoria (strain 85-10) (Xanthomonas campestris pv. vesicatoria)).